The sequence spans 190 residues: Cytoglobin (190 aa).

The segment at 1–21 (MEKVPGDMEIERRERNEELSE) is disordered. Residues 18 to 167 (ELSEAERKAV…IYSHVTAAYK (150 aa)) enclose the Globin domain. Cys38 and Cys83 form a disulfide bridge. Positions 81 and 113 each coordinate heme b.

This sequence belongs to the globin family. In terms of assembly, monomeric. Homodimer; disulfide-linked in vitro. Also homooligomeric in vitro. Post-translationally, the formation of an intramolecular disulfide bond between cysteines Cys-38 and Cys-83 specifically enhances the nitrite reductase activity. Widely expressed (at protein level).

It localises to the cytoplasm. Its subcellular location is the nucleus. It carries out the reaction Fe(II)-heme b-[protein] + nitric oxide + O2 = Fe(III)-heme b-[protein] + nitrate. The catalysed reaction is Fe(III)-heme b-[protein] + nitric oxide + H2O = Fe(II)-heme b-[protein] + nitrite + 2 H(+). It catalyses the reaction 2 superoxide + 2 H(+) = H2O2 + O2. The enzyme catalyses H2O2 + AH2 = A + 2 H2O. The nitric oxide dioxygenase activity is activated by a reducing system composed of cytochrome b5, its upstream reductase CYB5R3 and NADH. In terms of biological role, probable multifunctional globin with a hexacoordinated heme iron required for the catalysis of various reactions depending on redox condition of the cell as well as oxygen availability. Has a nitric oxide dioxygenase (NOD) activity and is most probably involved in cell-mediated and oxygen-dependent nitric oxide consumption. By scavenging this second messenger may regulate several biological processes including endothelium-mediated vasodilation and vascular tone. Under normoxic conditions functions as a nitric oxide dioxygenase (NOD) but under hypoxic conditions the globin may switch its function to that of a nitrite (NO2) reductase (NiR), generating nitric oxide. Could also have peroxidase and superoxide dismutase activities, detoxifying reactive oxygen species and protecting cells against oxidative stress. Also binds dioxygen with low affinity and could function as an oxygen sensor but has probably no function as a respiratory oxygen carrier. The sequence is that of Cytoglobin from Rattus norvegicus (Rat).